A 462-amino-acid polypeptide reads, in one-letter code: tRNA modification GTPase MnmE (462 aa).

Arg-23, Glu-86, and Lys-125 together coordinate (6S)-5-formyl-5,6,7,8-tetrahydrofolate. The 164-residue stretch at 221 to 384 (GIPVAIVGEP…LKNQLLSFVN (164 aa)) folds into the TrmE-type G domain. Residue Asn-231 coordinates K(+). GTP is bound by residues 231–236 (NVGKST), 250–256 (SEIAGTT), and 275–278 (DTAG). Position 235 (Ser-235) interacts with Mg(2+). The K(+) site is built by Ser-250, Ile-252, and Thr-255. Thr-256 contributes to the Mg(2+) binding site. Residue Lys-462 coordinates (6S)-5-formyl-5,6,7,8-tetrahydrofolate.

This sequence belongs to the TRAFAC class TrmE-Era-EngA-EngB-Septin-like GTPase superfamily. TrmE GTPase family. In terms of assembly, homodimer. Heterotetramer of two MnmE and two MnmG subunits. K(+) serves as cofactor.

It is found in the cytoplasm. In terms of biological role, exhibits a very high intrinsic GTPase hydrolysis rate. Involved in the addition of a carboxymethylaminomethyl (cmnm) group at the wobble position (U34) of certain tRNAs, forming tRNA-cmnm(5)s(2)U34. In Flavobacterium psychrophilum (strain ATCC 49511 / DSM 21280 / CIP 103535 / JIP02/86), this protein is tRNA modification GTPase MnmE.